Here is a 104-residue protein sequence, read N- to C-terminus: L-rhamnose mutarotase (104 aa).

Tyrosine 18 contacts substrate. The active-site Proton donor is histidine 22. Substrate is bound by residues tyrosine 41 and 76-77 (WW).

Belongs to the rhamnose mutarotase family. In terms of assembly, homodimer.

The protein resides in the cytoplasm. The catalysed reaction is alpha-L-rhamnose = beta-L-rhamnose. The protein operates within carbohydrate metabolism; L-rhamnose metabolism. Functionally, involved in the anomeric conversion of L-rhamnose. The chain is L-rhamnose mutarotase from Acidiphilium cryptum (strain JF-5).